We begin with the raw amino-acid sequence, 30 residues long: GDDVKSACCDTCLCTKSNPPTCRCVDVGET.

Intrachain disulfides connect Cys-9–Cys-24 and Cys-14–Cys-22.

Its function is as follows. Inhibits trypsin (IC(50)=4.90 nM) and, to a lesser extent, alpha-chymotrypsin (IC(50)=1.87 uM). This Lathyrus sativus (White vetchling) protein is Bowman-Birk type proteinase inhibitor 3.